We begin with the raw amino-acid sequence, 199 residues long: MMIASFAIFLSHIIFITYATSNQRYFKPNMHNNMTITIRRTITKTATAIAVLHSDNGNINGTIHFQQDKNSTTISGEIKGLTPGLHGFHVHQYGDTTNGCISAGPHFNPYNKTHGDPTDEMRHVGDLGNIVAGADGTAHIDISDKHVQLLGPNSIIGRSLVVHADQDDLGKGVGDKKDESLKTGNAGGRVACGIVAISA.

Positions 1–20 are cleaved as a signal peptide; it reads MMIASFAIFLSHIIFITYAT. N-linked (GlcNAc...) asparagine glycosylation is found at N33, N60, and N70. H89, H91, and H106 together coordinate Cu cation. C100 and C192 are joined by a disulfide. Zn(2+) is bound at residue H106. N-linked (GlcNAc...) asparagine glycosylation is present at N111. 3 residues coordinate Zn(2+): H114, H123, and D126. H163 contributes to the Cu cation binding site.

It belongs to the Cu-Zn superoxide dismutase family. In terms of assembly, homodimer. Cu cation serves as cofactor. It depends on Zn(2+) as a cofactor.

The protein localises to the secreted. It is found in the extracellular space. The enzyme catalyses 2 superoxide + 2 H(+) = H2O2 + O2. Protect the extracellular space from toxic effect of reactive oxygen intermediates by converting superoxide radicals into hydrogen peroxide and oxygen. May act in the parasite defense by neutralizing superoxide generated by activated leukocytes, thus acting as both an antioxidant and an anti-inflammatory factor. This Brugia pahangi (Filarial nematode worm) protein is Extracellular superoxide dismutase [Cu-Zn].